Reading from the N-terminus, the 152-residue chain is UPF0266 membrane protein KPK_1957 (152 aa).

The next 3 membrane-spanning stretches (helical) occupy residues leucine 6 to methionine 26, valine 45 to histidine 65, and threonine 67 to isoleucine 87.

It belongs to the UPF0266 family.

It localises to the cell inner membrane. The protein is UPF0266 membrane protein KPK_1957 of Klebsiella pneumoniae (strain 342).